Here is a 927-residue protein sequence, read N- to C-terminus: Autophagy-related protein 13 (927 aa).

5 disordered regions span residues 1–66 (MHQQ…PPAD), 334–359 (SLPQ…RSKP), 388–559 (LRSV…AQPG), 628–716 (TESM…TIRE), and 786–927 (QMQL…RRGW). A compositionally biased stretch (polar residues) spans 14-30 (PGATTQPNLPSRSNSTR). Composition is skewed to polar residues over residues 393–402 (QPGSDTSSPP), 513–523 (PASTSRYSSSF), and 544–557 (GSSG…SVAQ). The span at 630-671 (SMTSSVQMQRSSSSSSRQLTSVPGMTAPASVSASSSPGKPLS) shows a compositional bias: low complexity. Positions 684-716 (LSENSIIDYSGQGRITSRQGRTSDNTQPGTIRE) are enriched in polar residues. Positions 793-803 (STQRPSDRLEP) are enriched in basic and acidic residues. The segment covering 850–868 (HKQTPPQSSRGSFNGSLNR) has biased composition (polar residues). Residues 891-901 (PQGRRSIEEAR) are compositionally biased toward basic and acidic residues.

It belongs to the ATG13 family. Fungi subfamily. Hypophosphorylated form interacts with ATG1 to form the ATG1-ATG13 kinase complex. The ATG1-ATG13 complex interacts with the ATG17-ATG29-ATG31 complex through direct interaction with ATG17.

It is found in the cytoplasm. It localises to the preautophagosomal structure. Its function is as follows. Activates the ATG1 kinase in a nutritional condition dependent manner through the TOR pathway, leading to autophagy. Involved in ATG9 and ATG23 cycling through the pre-autophagosomal structure. Also involved in cytoplasm to vacuole transport (Cvt) and more specifically in Cvt vesicle formation. Seems to play a role in the switching machinery regulating the conversion between the Cvt pathway and autophagy. Finally, ATG13 is also required for glycogen storage during stationary phase. Autophagy is required for proper vegetative growth, asexual/sexual reproduction, and full virulence. Autophagy is particularly involved in the biosynthesis of deoxynivalenol (DON), an important virulence determinant. This Gibberella zeae (strain ATCC MYA-4620 / CBS 123657 / FGSC 9075 / NRRL 31084 / PH-1) (Wheat head blight fungus) protein is Autophagy-related protein 13.